Here is a 58-residue protein sequence, read N- to C-terminus: MIYRNWSLLSSTVVIWGGVATAGLAGIFLFGGKEKFQNYLCREGERLRQQDRAAMGKN.

As to quaternary structure, component of complex II composed of eight subunits in plants: four classical SDH subunits SDH1, SDH2, SDH3 and SDH4 (a flavoprotein (FP), an iron-sulfur protein (IP), and a cytochrome b composed of a large and a small subunit.), as well as four subunits unknown in mitochondria from bacteria and heterotrophic eukaryotes.

It is found in the mitochondrion inner membrane. It participates in carbohydrate metabolism; tricarboxylic acid cycle. The sequence is that of Succinate dehydrogenase subunit 8A, mitochondrial from Oryza sativa subsp. japonica (Rice).